The chain runs to 350 residues: Outer membrane protein A (350 aa).

A signal peptide spans 1–21 (MKKTAIAIAVALAGFATVAQA). Transmembrane regions (beta stranded) follow at residues 27–37 (TWYAGGKLGWS), 59–70 (QLGAGAFGGYQV), 74–82 (LGFEMGYDW), 100–111 (QAVQLTAKLGYP), 116–124 (LDIYTRLGG), 146–155 (PVFAGGVEWA), 160–167 (IATRLEYQ), and 186–194 (MLSVGVSYR). 4 tandem repeats follow at residues 205–206 (AP), 207–208 (AP), 209–210 (AP), and 211–212 (AP). Residues 205 to 212 (APAPAPAP) are 4 X 2 AA tandem repeats of A-P. Positions 214–342 (VTTKTFTLKS…RVAIEVKGYK (129 aa)) constitute an OmpA-like domain. An intrachain disulfide couples cysteine 315 to cysteine 327.

It belongs to the outer membrane OOP (TC 1.B.6) superfamily. OmpA family. In terms of assembly, monomer and homodimer.

It localises to the cell outer membrane. In terms of biological role, with TolR probably plays a role in maintaining the position of the peptidoglycan cell wall in the periplasm. Acts as a porin with low permeability that allows slow penetration of small solutes; an internal gate slows down solute passage. Its function is as follows. Required for conjugation with F-type plasmids; probably serves as the mating receptor on recipient cells. In Klebsiella aerogenes (Enterobacter aerogenes), this protein is Outer membrane protein A.